The chain runs to 88 residues: UPF0297 protein RBAM_024500 (88 aa).

This sequence belongs to the UPF0297 family.

This chain is UPF0297 protein RBAM_024500, found in Bacillus velezensis (strain DSM 23117 / BGSC 10A6 / LMG 26770 / FZB42) (Bacillus amyloliquefaciens subsp. plantarum).